Reading from the N-terminus, the 215-residue chain is Holliday junction branch migration complex subunit RuvA (215 aa).

Residues 1 to 67 (MIGWLQGERI…DDGSTLFGFC (67 aa)) form a domain I region. A domain II region spans residues 68-146 (DQQERDLFRT…NWAPLQEPSL (79 aa)). The segment at 147–158 (SLVDRSDVKAIP) is flexible linker. The segment at 159 to 215 (LGEPCLRDLQITLETLGYEDLEIRRAMRAVASGPDVPAEDDGDAWLRASLKWLSQSA) is domain III.

Belongs to the RuvA family. In terms of assembly, homotetramer. Forms an RuvA(8)-RuvB(12)-Holliday junction (HJ) complex. HJ DNA is sandwiched between 2 RuvA tetramers; dsDNA enters through RuvA and exits via RuvB. An RuvB hexamer assembles on each DNA strand where it exits the tetramer. Each RuvB hexamer is contacted by two RuvA subunits (via domain III) on 2 adjacent RuvB subunits; this complex drives branch migration. In the full resolvosome a probable DNA-RuvA(4)-RuvB(12)-RuvC(2) complex forms which resolves the HJ.

Its subcellular location is the cytoplasm. In terms of biological role, the RuvA-RuvB-RuvC complex processes Holliday junction (HJ) DNA during genetic recombination and DNA repair, while the RuvA-RuvB complex plays an important role in the rescue of blocked DNA replication forks via replication fork reversal (RFR). RuvA specifically binds to HJ cruciform DNA, conferring on it an open structure. The RuvB hexamer acts as an ATP-dependent pump, pulling dsDNA into and through the RuvAB complex. HJ branch migration allows RuvC to scan DNA until it finds its consensus sequence, where it cleaves and resolves the cruciform DNA. This is Holliday junction branch migration complex subunit RuvA from Synechococcus sp. (strain WH7803).